We begin with the raw amino-acid sequence, 632 residues long: Cytoplasmic polyadenylation element-binding protein 3 (632 aa).

Residues 1 to 11 (MQDDLLMDKSK) show a composition bias toward basic and acidic residues. 2 disordered regions span residues 1–89 (MQDD…TGGS) and 127–212 (FSPQ…RRAV). Positions 13 to 48 (QQRQQPQQPPSSQTQQQQKEAASVAEPPSSRESSPP) are enriched in low complexity. Polar residues-rich tracts occupy residues 65–89 (SFQQEPPTTPSLSPSFGSTWSTGGS) and 135–169 (HQTQQQQRRSPASPNNHTAYTQRNAYSHQPILTNK). Positions 170–193 (PSSSPNSSSPSPSNWNNQQNAAWN) are enriched in low complexity. RRM domains follow at residues 375-466 (RKVF…PWNL) and 483-565 (KTIF…PYVL).

Belongs to the RRM CPEB family. As to quaternary structure, following synaptic activity, forms amyloid-like oligomers. Aggregation requires an intact actin cytoskeleton. In terms of tissue distribution, in embryos, expressed in the central nervous system, and intermediate and distal pronephric tubule segments of the embryonic kidney.

The protein localises to the cytoplasm. It is found in the nucleus. The protein resides in the synapse. It localises to the cell projection. Its subcellular location is the dendrite. The protein localises to the postsynaptic density. In terms of biological role, sequence-specific RNA-binding protein which acts as a translational repressor in the basal unstimulated state but, following neuronal stimulation, acts as a translational activator. Does not bind to the cytoplasmic polyadenylation element (CPE), a uridine-rich sequence element within the mRNA 3'-UTR, but binds to a U-rich loop within a stem-loop structure. Required for the consolidation and maintenance of hippocampal-based long term memory. Inhibits differentiation of intermediate mesoderm from an early stage to inhibit pronephric differentiation but induce neural differentiation. In Xenopus tropicalis (Western clawed frog), this protein is Cytoplasmic polyadenylation element-binding protein 3 (cpeb3).